The sequence spans 157 residues: Mediator of RNA polymerase II transcription subunit 10 (157 aa).

This sequence belongs to the Mediator complex subunit 10 family. Component of the Mediator complex, which is composed of at least 21 subunits that form three structurally distinct submodules. The Mediator head module contains MED6, MED8, MED11, SRB4/MED17, SRB5/MED18, ROX3/MED19, SRB2/MED20 and SRB6/MED22, the middle module contains MED1, MED4, NUT1/MED5, MED7, CSE2/MED9, NUT2/MED10, SRB7/MED21 and SOH1/MED31, and the tail module contains MED2, PGD1/MED3, RGR1/MED14, GAL11/MED15 and SIN4/MED16. The head and the middle modules interact directly with RNA polymerase II, whereas the elongated tail module interacts with gene-specific regulatory proteins. NUT2/MED10 interacts directly with SRB7/MED21.

The protein resides in the nucleus. Functionally, component of the Mediator complex, a coactivator involved in the regulated transcription of nearly all RNA polymerase II-dependent genes. Mediator functions as a bridge to convey information from gene-specific regulatory proteins to the basal RNA polymerase II transcription machinery. The Mediator complex, having a compact conformation in its free form, is recruited to promoters by direct interactions with regulatory proteins and serves for the assembly of a functional preinitiation complex with RNA polymerase II and the general transcription factors. The Mediator complex unfolds to an extended conformation and partially surrounds RNA polymerase II, specifically interacting with the unphosphorylated form of the C-terminal domain (CTD) of RNA polymerase II. The Mediator complex dissociates from the RNA polymerase II holoenzyme and stays at the promoter when transcriptional elongation begins. In Saccharomyces cerevisiae (strain ATCC 204508 / S288c) (Baker's yeast), this protein is Mediator of RNA polymerase II transcription subunit 10 (NUT2).